Reading from the N-terminus, the 414-residue chain is Esterase FrsA (414 aa).

It belongs to the FrsA family.

It catalyses the reaction a carboxylic ester + H2O = an alcohol + a carboxylate + H(+). Functionally, catalyzes the hydrolysis of esters. The protein is Esterase FrsA of Shigella boydii serotype 4 (strain Sb227).